The chain runs to 512 residues: Retinaldehyde dehydrogenase 3 (512 aa).

The interval 1 to 22 is disordered; sequence MATTNGAVENGQPDGKPPALPR. An N-acetylalanine modification is found at Ala2. NAD(+) contacts are provided by residues Lys204, Glu207, and 257-262; that span reads GSTEVG. Glu280 functions as the Proton acceptor in the catalytic mechanism. Cys314 (nucleophile) is an active-site residue. Residues Gln361 and Glu411 each contribute to the NAD(+) site.

It belongs to the aldehyde dehydrogenase family. As to quaternary structure, homotetramer. As to expression, detected in embryonic head (at protein level). Ventral retina.

It localises to the cytoplasm. It catalyses the reaction retinal + NAD(+) + H2O = retinoate + NADH + 2 H(+). The enzyme catalyses all-trans-retinal + NAD(+) + H2O = all-trans-retinoate + NADH + 2 H(+). It carries out the reaction all-trans-13,14-dihydroretinal + NAD(+) + H2O = all-trans-13,14-dihydroretinoate + NADH + 2 H(+). The protein operates within cofactor metabolism; retinol metabolism. Functionally, catalyzes the NAD-dependent oxidation of aldehyde substrates, such as all-trans-retinal and all-trans-13,14-dihydroretinal, to their corresponding carboxylic acids, all-trans-retinoate and all-trans-13,14-dihydroretinoate, respectively. High specificity for all-trans-retinal as substrate, can also accept acetaldehyde as substrate in vitro but with lower affinity. Required for the biosynthesis of normal levels of retinoate in the embryonic ocular and nasal regions; a critical lipid in the embryonic development of the eye and the nasal region. In Mus musculus (Mouse), this protein is Retinaldehyde dehydrogenase 3 (Aldh1a3).